A 105-amino-acid chain; its full sequence is uncharacterized protein (105 aa).

It belongs to the asfivirus C122R family.

It is found in the virion. This is an uncharacterized protein from African swine fever virus (strain Badajoz 1971 Vero-adapted) (Ba71V).